A 924-amino-acid chain; its full sequence is Protein argonaute 4 (924 aa).

Disordered regions lie at residues 1-37 (MDSTNGNGADLESANGANGSGVTEALPPPPPVIPPNV) and 159-185 (TRANGNGSPNGNESPSDGDRKRLRRPN). The segment covering 26-37 (LPPPPPVIPPNV) has biased composition (pro residues). The segment covering 162–173 (NGNGSPNGNESP) has biased composition (low complexity). One can recognise a PAZ domain in the interval 292-408 (PVVDFLIANQ…IPLELCALVP (117 aa)). Residues 577–885 (FILCVLPDKK…AAAQLGTFMK (309 aa)) enclose the Piwi domain. The Nuclear localization signal signature appears at 584-591 (DKKNSDLY).

It belongs to the argonaute family. Ago subfamily. Interacts with NRPE1 (via C-terminus). Binding to NRPE1 is required for its function in RdDM. Interacts with turnip crinkle virus (TCV) capsid protein P38; this interaction inhibits probably RNA silencing ability of AGO4. Interacts with SDE3. Binds to RDM3. Binds chromatin at loci subject to transcriptional silencing. Interacts with MBD6. As to expression, expressed in embryos, mature leaves, vascular tissue of the sepals, stamens and stigma, at the tip of the style and siliques.

The protein resides in the nucleus. Its subcellular location is the nucleolus. The protein localises to the nucleoplasm. It localises to the cajal body. Together with RDM3, required for transcriptional gene silencing (TGS) by DNA methylation and repressive histone modifications (H3K9me2) of several chromatin loci. Component of the RISC complex that associate with the small interfering RNA (siRNA) pathway involved in direct cytosine methylation at endogenous DNA repeats. Forms a AGO4/NRPE1/siRNA complex in cajal body, facilitating its function in RNA-directed gene silencing of target loci. Required for CpNpG and asymmetric DNA methylation as well as histone H3 'Lys-9' methylation (H3K9me) at SUP and SN1 loci. May be not required for CpG methylation. Required for the production and maintenance of retrotransposon SN1 and Copia and ribosomal 5S 25 nucleotide siRNAs specialized in gene silencing at chromatin level. Involved in de novo methylation of FWA gene and required for the maintenance of RNA-directed DNA methylation (RdDM) triggered by inverted repeat transgenes. Interacts with miRNA miR390 and miR172, targeting respectively TAS3 and AP2 mRNAs, and mediates cleavage of miRNA targets. Associates mainly with small RNAs of 24 nucleotide in length and preferentially recruits small RNAs with a 5' terminal adenosine. Targeted by the turnip yellows virus (TuYV) protein P0 (via F-box-like domain) for probable proteasome degradation and thereby inactivating AGO4 function in RNA silencing. Required for resistance to the bacterial pathogen P.syringae. Works independently of the RdDM pathway in mediating resistance to P.syringae. RdDM is involved in viral genome methylation as an epigenetic defense against geminiviruses. The chain is Protein argonaute 4 from Arabidopsis thaliana (Mouse-ear cress).